Here is a 174-residue protein sequence, read N- to C-terminus: Ribosomal RNA large subunit methyltransferase H (174 aa).

Residues L90, G122, and 141–146 (LGELTW) contribute to the S-adenosyl-L-methionine site.

It belongs to the RNA methyltransferase RlmH family. As to quaternary structure, homodimer.

The protein resides in the cytoplasm. It catalyses the reaction pseudouridine(1915) in 23S rRNA + S-adenosyl-L-methionine = N(3)-methylpseudouridine(1915) in 23S rRNA + S-adenosyl-L-homocysteine + H(+). Specifically methylates the pseudouridine at position 1915 (m3Psi1915) in 23S rRNA. The chain is Ribosomal RNA large subunit methyltransferase H from Brucella melitensis biotype 2 (strain ATCC 23457).